The chain runs to 739 residues: DNA ligase (739 aa).

Residue 34-38 participates in NAD(+) binding; sequence DADYD. Basic and acidic residues predominate over residues 49 to 59; it reads ARFPHLKRPDS. The disordered stretch occupies residues 49–70; the sequence is ARFPHLKRPDSPSEQVGARPGE. NAD(+) is bound by residues 83-84 and glutamate 117; that span reads SL. The active-site N6-AMP-lysine intermediate is the lysine 119. Positions 140, 175, 291, and 315 each coordinate NAD(+). 4 residues coordinate Zn(2+): cysteine 420, cysteine 423, cysteine 438, and cysteine 444. One can recognise a BRCT domain in the interval 660–739; that stretch reads ARDSPVAGKT…DGWLKLIEGL (80 aa).

The protein belongs to the NAD-dependent DNA ligase family. LigA subfamily. The cofactor is Mg(2+). It depends on Mn(2+) as a cofactor.

The enzyme catalyses NAD(+) + (deoxyribonucleotide)n-3'-hydroxyl + 5'-phospho-(deoxyribonucleotide)m = (deoxyribonucleotide)n+m + AMP + beta-nicotinamide D-nucleotide.. Functionally, DNA ligase that catalyzes the formation of phosphodiester linkages between 5'-phosphoryl and 3'-hydroxyl groups in double-stranded DNA using NAD as a coenzyme and as the energy source for the reaction. It is essential for DNA replication and repair of damaged DNA. The sequence is that of DNA ligase from Ruegeria pomeroyi (strain ATCC 700808 / DSM 15171 / DSS-3) (Silicibacter pomeroyi).